The sequence spans 398 residues: Lysophospholipid transporter LplT (398 aa).

Transmembrane regions (helical) follow at residues 19-39 (VIVA…ATLA), 53-73 (VLQM…GQIA), 96-116 (ICLG…AAAY), 139-159 (LMEA…GVLA), 164-184 (IAAL…NLFI), 195-213 (SWQL…VVLW), 227-247 (LFWG…PVAL), 257-277 (YLNA…AKLV), 281-301 (TVSR…MFSL), 304-324 (ALLP…FFVV), 352-372 (NSTM…GVPA), and 373-393 (VATG…LWIW).

Belongs to the major facilitator superfamily. LplT (TC 2.A.1.42) family.

The protein resides in the cell inner membrane. Catalyzes the facilitated diffusion of 2-acyl-glycero-3-phosphoethanolamine (2-acyl-GPE) into the cell. The sequence is that of Lysophospholipid transporter LplT from Salmonella arizonae (strain ATCC BAA-731 / CDC346-86 / RSK2980).